A 751-amino-acid chain; its full sequence is Catalase-peroxidase (751 aa).

A cross-link (tryptophyl-tyrosyl-methioninium (Trp-Tyr) (with M-266)) is located at residues 92-240 (WHSAGTYRVT…VAAAHMGLIY (149 aa)). H93 functions as the Proton acceptor in the catalytic mechanism. A cross-link (tryptophyl-tyrosyl-methioninium (Tyr-Met) (with W-92)) is located at residues 240–266 (YVNPEGPDGVPDPIAAARDIRTTFHRM). Heme b is bound at residue H281.

This sequence belongs to the peroxidase family. Peroxidase/catalase subfamily. In terms of assembly, homodimer or homotetramer. Heme b serves as cofactor. Formation of the three residue Trp-Tyr-Met cross-link is important for the catalase, but not the peroxidase activity of the enzyme.

Its subcellular location is the cytoplasm. It catalyses the reaction H2O2 + AH2 = A + 2 H2O. It carries out the reaction 2 H2O2 = O2 + 2 H2O. In terms of biological role, bifunctional enzyme with both catalase and broad-spectrum peroxidase activity. The chain is Catalase-peroxidase from Phaeosphaeria nodorum (strain SN15 / ATCC MYA-4574 / FGSC 10173) (Glume blotch fungus).